We begin with the raw amino-acid sequence, 298 residues long: Ribosomal RNA small subunit methyltransferase H (298 aa).

S-adenosyl-L-methionine is bound by residues 31–33, Asp50, Tyr80, Asp95, and Gln102; that span reads GGH. The interval 255–298 is disordered; that stretch reads AEKDLYGNTNKPFKSVGKAIDPDDEEKERNNRARSARLRIAERE.

It belongs to the methyltransferase superfamily. RsmH family.

It is found in the cytoplasm. It catalyses the reaction cytidine(1402) in 16S rRNA + S-adenosyl-L-methionine = N(4)-methylcytidine(1402) in 16S rRNA + S-adenosyl-L-homocysteine + H(+). In terms of biological role, specifically methylates the N4 position of cytidine in position 1402 (C1402) of 16S rRNA. The polypeptide is Ribosomal RNA small subunit methyltransferase H (Cytophaga hutchinsonii (strain ATCC 33406 / DSM 1761 / CIP 103989 / NBRC 15051 / NCIMB 9469 / D465)).